A 106-amino-acid chain; its full sequence is ER membrane protein complex subunit 5 (106 aa).

Residues 1-12 (MESSTINAKKIS) are Cytoplasmic-facing. The chain crosses the membrane as a helical span at residues 13 to 33 (VLLTLFSIIGYTAYSAHESIL). The Lumenal portion of the chain corresponds to 34–46 (EIRQDGKLPLDIK). A helical membrane pass occupies residues 47–67 (CEVILVTLLFTFTTVIIASPL). Residues 68–106 (RSIQLNKWSHQRSDLAFLNSRTNFLRIKELKEKIEKVKN) are Cytoplasmic-facing.

Belongs to the membrane magnesium transporter (TC 1.A.67) family. Component of the ER membrane protein complex (EMC).

It localises to the endoplasmic reticulum membrane. The EMC seems to be required for efficient folding of proteins in the endoplasmic reticulum (ER). The sequence is that of ER membrane protein complex subunit 5 (emc5) from Schizosaccharomyces pombe (strain 972 / ATCC 24843) (Fission yeast).